Here is a 1097-residue protein sequence, read N- to C-terminus: DNA-directed RNA polymerase subunit beta (1097 aa).

The segment at 1072 to 1097 (QDINPRRNTPSRPTYESLGTSEYEED) is disordered. Over residues 1077–1091 (RRNTPSRPTYESLGT) the composition is skewed to polar residues.

This sequence belongs to the RNA polymerase beta chain family. In terms of assembly, in cyanobacteria the RNAP catalytic core is composed of 2 alpha, 1 beta, 1 beta', 1 gamma and 1 omega subunit. When a sigma factor is associated with the core the holoenzyme is formed, which can initiate transcription.

It carries out the reaction RNA(n) + a ribonucleoside 5'-triphosphate = RNA(n+1) + diphosphate. In terms of biological role, DNA-dependent RNA polymerase catalyzes the transcription of DNA into RNA using the four ribonucleoside triphosphates as substrates. This Prochlorococcus marinus (strain MIT 9215) protein is DNA-directed RNA polymerase subunit beta.